A 306-amino-acid polypeptide reads, in one-letter code: Protein pxr1 (306 aa).

A compositionally biased stretch (basic residues) spans 1-11 (MGLAAPRKRTK). Disordered regions lie at residues 1-27 (MGLA…STSG) and 148-241 (AQKE…SDIP). A compositionally biased stretch (polar residues) spans 15–27 (DPNNTNWSRSTSG). Positions 25 to 79 (TSGYGHKIMSSQGWTPGSFLGARNAAHADMFTAASASHIRVVVKDDTLGLGARSK) constitute a G-patch domain. The span at 182 to 191 (NTLKALREEQ) shows a compositional bias: basic and acidic residues. Residues 219–228 (KKERKTKKRK) show a composition bias toward basic residues.

The protein belongs to the PINX1 family.

The protein resides in the nucleus. It localises to the nucleolus. In terms of biological role, involved in rRNA-processing at A0, A1 and A2 sites and negatively regulates telomerase. The sequence is that of Protein pxr1 (pxr1) from Aspergillus oryzae (strain ATCC 42149 / RIB 40) (Yellow koji mold).